Reading from the N-terminus, the 153-residue chain is Prostaglandin E synthase (153 aa).

Over 1–13 (MPSPGLVMESGQV) the chain is Lumenal. The helical transmembrane segment at 14–42 (LPAFLLCSTLLVIKMYAVAVITGQMRLRK) threads the bilayer. R39 serves as a coordination point for glutathione. The Cytoplasmic segment spans residues 43–61 (KAFANPEDALKRGGLQYYR). Residues 62 to 91 (SDPDVERCLRAHRNDMETIYPFLFLGFVYS) form a helical membrane-spanning segment. 74–78 (RNDME) is a binding site for glutathione. The Lumenal portion of the chain corresponds to 92–96 (FLGPN). Residues 97-120 (PLIAWIHFLVVLTGRVVHTVAYLG) form a helical membrane-spanning segment. Glutathione contacts are provided by H114 and Y118. The Cytoplasmic portion of the chain corresponds to 121-124 (KLNP). The helical transmembrane segment at 125–153 (RLRSGAYVLAQFSCFSMALQILWEVAHHL) threads the bilayer. 127–131 (RSGAY) provides a ligand contact to glutathione.

The protein belongs to the MAPEG family. Homotrimer. It depends on glutathione as a cofactor.

Its subcellular location is the membrane. The protein resides in the cytoplasm. The protein localises to the perinuclear region. The catalysed reaction is prostaglandin H2 = prostaglandin E2. It carries out the reaction 2-glyceryl-prostaglandin H2 = 2-glyceryl-prostaglandin E2. It catalyses the reaction prostaglandin G2 = (15S)-15-hydroperoxy-prostaglandin E2. The enzyme catalyses 1-chloro-2,4-dinitrobenzene + glutathione = 2,4-dinitrophenyl-S-glutathione + chloride + H(+). The catalysed reaction is (5S)-hydroperoxy-(6E,8Z,11Z,14Z)-eicosatetraenoate + 2 glutathione = (5S)-hydroxy-(6E,8Z,11Z,14Z)-eicosatetraenoate + glutathione disulfide + H2O. The protein operates within lipid metabolism; prostaglandin biosynthesis. Its activity is regulated as follows. Activity is increased markedly in macrophages and osteoblasts following pro-inflammatory stimuli. Terminal enzyme of the cyclooxygenase (COX)-2-mediated prostaglandin E2 (PGE2) biosynthetic pathway. Catalyzes the glutathione-dependent oxidoreduction of prostaglandin endoperoxide H2 (PGH2) to prostaglandin E2 (PGE2) in response to inflammatory stimuli. Plays a key role in inflammation response, fever and pain. Also catalyzes the oxidoreduction of endocannabinoids into prostaglandin glycerol esters and PGG2 into 15-hydroperoxy-PGE2. In addition, displays low glutathione transferase and glutathione-dependent peroxidase activities, toward 1-chloro-2,4-dinitrobenzene and 5-hydroperoxyicosatetraenoic acid (5-HPETE), respectively. This Mus musculus (Mouse) protein is Prostaglandin E synthase (Ptges).